We begin with the raw amino-acid sequence, 145 residues long: Large ribosomal subunit protein uL11 (145 aa).

This sequence belongs to the universal ribosomal protein uL11 family. As to quaternary structure, part of the ribosomal stalk of the 50S ribosomal subunit. Interacts with L10 and the large rRNA to form the base of the stalk. L10 forms an elongated spine to which L12 dimers bind in a sequential fashion forming a multimeric L10(L12)X complex. In terms of processing, one or more lysine residues are methylated.

In terms of biological role, forms part of the ribosomal stalk which helps the ribosome interact with GTP-bound translation factors. This chain is Large ribosomal subunit protein uL11, found in Rickettsia prowazekii (strain Madrid E).